We begin with the raw amino-acid sequence, 34 residues long: Turripeptide OL127 (34 aa).

Post-translationally, contains 4 disulfide bonds. As to expression, expressed by the venom duct.

The protein resides in the secreted. Functionally, acts as a neurotoxin by inhibiting an ion channel. The polypeptide is Turripeptide OL127 (Iotyrris olangoensis (Sea snail)).